The following is a 174-amino-acid chain: Crossover junction endodeoxyribonuclease RuvC (174 aa).

Residues aspartate 8, glutamate 67, and aspartate 139 contribute to the active site. 3 residues coordinate Mg(2+): aspartate 8, glutamate 67, and aspartate 139.

This sequence belongs to the RuvC family. Homodimer which binds Holliday junction (HJ) DNA. The HJ becomes 2-fold symmetrical on binding to RuvC with unstacked arms; it has a different conformation from HJ DNA in complex with RuvA. In the full resolvosome a probable DNA-RuvA(4)-RuvB(12)-RuvC(2) complex forms which resolves the HJ. Mg(2+) is required as a cofactor.

It is found in the cytoplasm. It carries out the reaction Endonucleolytic cleavage at a junction such as a reciprocal single-stranded crossover between two homologous DNA duplexes (Holliday junction).. Its function is as follows. The RuvA-RuvB-RuvC complex processes Holliday junction (HJ) DNA during genetic recombination and DNA repair. Endonuclease that resolves HJ intermediates. Cleaves cruciform DNA by making single-stranded nicks across the HJ at symmetrical positions within the homologous arms, yielding a 5'-phosphate and a 3'-hydroxyl group; requires a central core of homology in the junction. The consensus cleavage sequence is 5'-(A/T)TT(C/G)-3'. Cleavage occurs on the 3'-side of the TT dinucleotide at the point of strand exchange. HJ branch migration catalyzed by RuvA-RuvB allows RuvC to scan DNA until it finds its consensus sequence, where it cleaves and resolves the cruciform DNA. This is Crossover junction endodeoxyribonuclease RuvC from Ectopseudomonas mendocina (strain ymp) (Pseudomonas mendocina).